The following is a 427-amino-acid chain: 12-alpha,13-alpha-dihydroxyfumitremorgin C prenyltransferase (427 aa).

Glu-94 provides a ligand contact to substrate. Residues Arg-105, Lys-192, Tyr-194, Tyr-268, Gln-353, Tyr-355, Tyr-419, and Tyr-423 each contribute to the dimethylallyl diphosphate site.

Belongs to the tryptophan dimethylallyltransferase family.

The catalysed reaction is 12alpha,13alpha-dihydroxyfumitremorgin C + dimethylallyl diphosphate = fumitremorgin B + diphosphate. Its pathway is mycotoxin biosynthesis. Functionally, 12-alpha,13-alpha-dihydroxyfumitremorgin C prenyltransferase; part of the gene cluster that mediates the biosynthesis of fumitremorgins, indole alkaloids that carry not only intriguing chemical structures, but also interesting biological and pharmacological activities. The biosynthesis of fumitremorgin-type alkaloids begins by condensation of the two amino acids L-tryptophan and L-proline to brevianamide F, catalyzed by the non-ribosomal peptide synthetase ftmA. Brevianamide F is then prenylated by the prenyltransferase ftmPT1/ftmB in the presence of dimethylallyl diphosphate, resulting in the formation of tryprostatin B. The three cytochrome P450 monooxygenases, ftmP450-1/ftmC, ftmP450-2/ftmE and ftmP450-3/FtmG, are responsible for the conversion of tryprostatin B to 6-hydroxytryprostatin B, tryprostatin A to fumitremorgin C and fumitremorgin C to 12,13-dihydroxyfumitremorgin C, respectively. The putative methyltransferase ftmMT/ftmD is expected for the conversion of 6-hydroxytryprostatin B to tryprostatin A. FtmPT2/FtmH catalyzes the prenylation of 12,13-dihydroxyfumitre-morgin C in the presence of dimethylallyl diphosphate, resulting in the formation of fumitremorgin B. Fumitremorgin B is further converted to verruculogen by ftmOx1/ftmF via the insertion of an endoperoxide bond between the two prenyl moieties. In some fungal species, verruculogen is further converted to fumitremorgin A, but the enzymes involved in this step have not been identified yet. This Aspergillus fumigatus (Neosartorya fumigata) protein is 12-alpha,13-alpha-dihydroxyfumitremorgin C prenyltransferase.